Here is a 557-residue protein sequence, read N- to C-terminus: Arginine--tRNA ligase (557 aa).

Residues Ala-132–His-142 carry the 'HIGH' region motif.

This sequence belongs to the class-I aminoacyl-tRNA synthetase family. In terms of assembly, monomer.

The protein resides in the cytoplasm. It catalyses the reaction tRNA(Arg) + L-arginine + ATP = L-arginyl-tRNA(Arg) + AMP + diphosphate. The sequence is that of Arginine--tRNA ligase from Bacillus pumilus (strain SAFR-032).